Reading from the N-terminus, the 151-residue chain is Large ribosomal subunit protein bL9 (151 aa).

Belongs to the bacterial ribosomal protein bL9 family.

In terms of biological role, binds to the 23S rRNA. This Mycolicibacterium vanbaalenii (strain DSM 7251 / JCM 13017 / BCRC 16820 / KCTC 9966 / NRRL B-24157 / PYR-1) (Mycobacterium vanbaalenii) protein is Large ribosomal subunit protein bL9.